Reading from the N-terminus, the 64-residue chain is Alpha-conotoxin-like Lt1.3 (64 aa).

An N-terminal signal peptide occupies residues 1–21 (MGMRMMFTMFLLVVLTTTVVS). Positions 22-45 (FNLDRESNHENRRTSNQITRGMWD) are excised as a propeptide. 2 disulfides stabilise this stretch: cysteine 47/cysteine 53 and cysteine 48/cysteine 61. The lacks the Ser-Xaa-Pro motif that is crucial for potent interaction with nAChR stretch occupies residues 49–51 (DDP).

Belongs to the conotoxin A superfamily. In terms of tissue distribution, expressed by the venom duct.

The protein resides in the secreted. In terms of biological role, alpha-conotoxins act on postsynaptic membranes, they bind to the nicotinic acetylcholine receptors (nAChR) and thus inhibit them. Has possibly a distinct nAChR binding mode from other alpha-conotoxins, due to a different three residue motif (lacks the Ser-Xaa-Pro motif). The polypeptide is Alpha-conotoxin-like Lt1.3 (Conus litteratus (Lettered cone)).